The chain runs to 754 residues: Exocyst complex component EXO84A (754 aa).

Disordered regions lie at residues 514 to 540 (RILP…EQRE) and 734 to 754 (GHGE…YTSN). A compositionally biased stretch (polar residues) spans 518–527 (QGTSQSTPRR). The span at 528-540 (GSSDRQNRPEQRE) shows a compositional bias: basic and acidic residues. Residues 741–754 (TSPSVSSAKSYTSN) are compositionally biased toward polar residues.

Belongs to the EXO84 family. In terms of assembly, the exocyst complex is composed of SEC3, SEC5, SEC6, SEC8, SEC10, EXO70A1 and EXO84.

Functionally, component of the exocyst complex involved in the docking of exocytic vesicles with fusion sites on the plasma membrane during regulated or polarized secretion. Involved in polarized cell growth and organ morphogenesis. During cytokinesis, involved in cell plate initiation, cell plate maturation and formation of new primary cell wall. This chain is Exocyst complex component EXO84A (EXO84A), found in Arabidopsis thaliana (Mouse-ear cress).